The sequence spans 597 residues: Integrator complex subunit 11 (597 aa).

The Zn(2+) site is built by His-68, His-70, Asp-72, His-73, His-157, and Asp-178. The short motif at 68 to 73 is the HXHXDH motif element; it reads HFHLDH. Residue Glu-203 is part of the active site. Residue His-414 participates in Zn(2+) binding. Lys-462 provides a ligand contact to 1D-myo-inositol hexakisphosphate.

It belongs to the metallo-beta-lactamase superfamily. RNA-metabolizing metallo-beta-lactamase-like family. INTS11 subfamily. As to quaternary structure, belongs to the multiprotein complex Integrator, at least composed of IntS1, IntS2, IntS3, IntS4, omd/IntS5, IntS6, defl/IntS7, IntS8, IntS9, IntS10, IntS11, IntS12, asun/IntS13, IntS14 and IntS15. The core complex associates with protein phosphatase 2A subunits mts/PP2A and Pp2A-29B, to form the Integrator-PP2A (INTAC) complex. IntS11 is part of the RNA endonuclease subcomplex, composed of IntS4, IntS9, IntS11 and inositol hexakisphosphate (InsP6). Interacts with Brat1; interaction is required for the assembly of the RNA endonuclease subcomplex and inhibits the endonuclease activity of IntS11 before formation of mature integrator complex. Zn(2+) is required as a cofactor. In terms of tissue distribution, expressed in neurons and glia of the larval and adult brain.

It is found in the nucleus. The protein resides in the cytoplasm. The protein localises to the cytosol. Its activity is regulated as follows. The RNA endonuclease activity is inhibited by Brat1 that forms hyrogen bond and hydrophobic interactions with the active site. In terms of biological role, RNA endonuclease component of the integrator complex, a multiprotein complex that terminates RNA polymerase II (Pol II) transcription in the promoter-proximal region of genes. The integrator complex provides a quality checkpoint during transcription elongation by driving premature transcription termination of transcripts that are unfavorably configured for transcriptional elongation: the complex terminates transcription by (1) catalyzing dephosphorylation of the C-terminal domain (CTD) of Pol II subunit Polr2A/Rbp1 and Spt5, and (2) degrading the exiting nascent RNA transcript via endonuclease activity. The integrator complex is also involved in the 3'-end processing of the U7 snRNA, and also the spliceosomal snRNAs U1, U2, U4 and U5. Within the integrator complex, IntS11 constitutes the RNA endonuclease subunit that degrades exiting nascent RNA transcripts. This is Integrator complex subunit 11 from Drosophila melanogaster (Fruit fly).